Consider the following 214-residue polypeptide: NADH-quinone oxidoreductase subunit C (214 aa).

This sequence belongs to the complex I 30 kDa subunit family. NDH-1 is composed of 14 different subunits. Subunits NuoB, C, D, E, F, and G constitute the peripheral sector of the complex.

Its subcellular location is the cell inner membrane. It carries out the reaction a quinone + NADH + 5 H(+)(in) = a quinol + NAD(+) + 4 H(+)(out). Functionally, NDH-1 shuttles electrons from NADH, via FMN and iron-sulfur (Fe-S) centers, to quinones in the respiratory chain. The immediate electron acceptor for the enzyme in this species is believed to be ubiquinone. Couples the redox reaction to proton translocation (for every two electrons transferred, four hydrogen ions are translocated across the cytoplasmic membrane), and thus conserves the redox energy in a proton gradient. This chain is NADH-quinone oxidoreductase subunit C, found in Caulobacter sp. (strain K31).